Reading from the N-terminus, the 450-residue chain is Sulfite exporter TauE/SafE family protein 1 (450 aa).

The next 12 membrane-spanning stretches (helical) occupy residues 5–25 (LVPL…SALA), 48–68 (TIEV…AASI), 70–90 (SAGG…IAGL), 97–117 (SFSA…NLFL), 130–150 (FDLA…GVIC), 153–173 (MFPN…STMK), 223–243 (FPWM…SINL), 261–281 (ALYW…TLCI), 316–336 (VMAL…GMLI), 340–360 (LLQI…MVLF), 378–398 (GTAA…LMVV), and 408–428 (ASII…LMTT).

Belongs to the 4-toluene sulfonate uptake permease (TSUP) (TC 2.A.102) family.

It localises to the membrane. The sequence is that of Sulfite exporter TauE/SafE family protein 1 from Arabidopsis thaliana (Mouse-ear cress).